A 363-amino-acid chain; its full sequence is DNA replication and repair protein RecF (363 aa).

Residue 30 to 37 participates in ATP binding; sequence GSNGSGKT.

This sequence belongs to the RecF family.

Its subcellular location is the cytoplasm. The RecF protein is involved in DNA metabolism; it is required for DNA replication and normal SOS inducibility. RecF binds preferentially to single-stranded, linear DNA. It also seems to bind ATP. The protein is DNA replication and repair protein RecF of Photorhabdus laumondii subsp. laumondii (strain DSM 15139 / CIP 105565 / TT01) (Photorhabdus luminescens subsp. laumondii).